The following is a 203-amino-acid chain: Small ribosomal subunit protein uS4 (203 aa).

In terms of domain architecture, S4 RNA-binding spans 93–155 (RRLDSIVYRL…SKNLQQIRDA (63 aa)).

This sequence belongs to the universal ribosomal protein uS4 family. As to quaternary structure, part of the 30S ribosomal subunit. Contacts protein S5. The interaction surface between S4 and S5 is involved in control of translational fidelity.

In terms of biological role, one of the primary rRNA binding proteins, it binds directly to 16S rRNA where it nucleates assembly of the body of the 30S subunit. With S5 and S12 plays an important role in translational accuracy. The polypeptide is Small ribosomal subunit protein uS4 (Lactobacillus acidophilus (strain ATCC 700396 / NCK56 / N2 / NCFM)).